The chain runs to 375 residues: Tyrosine--tRNA ligase (375 aa).

5 residues coordinate L-tyrosine: Tyr37, Tyr168, Gln172, Asp175, and Gln190. Residues 251–255 (KMSKS) carry the 'KMSKS' region motif. Lys254 contacts ATP.

This sequence belongs to the class-I aminoacyl-tRNA synthetase family. TyrS type 4 subfamily. In terms of assembly, homodimer.

Its subcellular location is the cytoplasm. It catalyses the reaction tRNA(Tyr) + L-tyrosine + ATP = L-tyrosyl-tRNA(Tyr) + AMP + diphosphate + H(+). Functionally, catalyzes the attachment of tyrosine to tRNA(Tyr) in a two-step reaction: tyrosine is first activated by ATP to form Tyr-AMP and then transferred to the acceptor end of tRNA(Tyr). This Pyrococcus horikoshii (strain ATCC 700860 / DSM 12428 / JCM 9974 / NBRC 100139 / OT-3) protein is Tyrosine--tRNA ligase.